We begin with the raw amino-acid sequence, 1165 residues long: Peroxisomal ATPase PEX6 (1165 aa).

It belongs to the AAA ATPase family. As to quaternary structure, interacts with PEX1; forming the PEX1-PEX6 AAA ATPase complex, which is composed of a heterohexamer formed by a trimer of PEX1-PEX6 dimers.

It localises to the membrane. It carries out the reaction ATP + H2O = ADP + phosphate + H(+). In terms of biological role, component of the PEX1-PEX6 AAA ATPase complex involved in peroxisome biosynthesis. The complex acts as a protein dislocase complex that mediates the ATP-dependent extraction of the PEX5 receptor from peroxisomal membranes, an essential step for PEX5 recycling. Specifically recognizes PEX5 monoubiquitinated at 'Cys-6', and pulls it out of the peroxisome lumen through the PEX2-PEX10-PEX12 retrotranslocation channel. Extraction by the PEX1-PEX6 AAA ATPase complex is accompanied by unfolding of the TPR repeats and release of bound cargo from PEX5. The chain is Peroxisomal ATPase PEX6 from Komagataella pastoris (Yeast).